Reading from the N-terminus, the 336-residue chain is Protein SGT1 homolog (336 aa).

Ala2 carries the N-acetylalanine modification. 3 TPR repeats span residues Ser11–Asp44, Ala45–Asn78, and Cys79–Asp112. The region spanning Gln140 to Glu229 is the CS domain. Residue Thr236 is modified to Phosphothreonine. The 90-residue stretch at Met247–Tyr336 folds into the SGS domain. Ser252 carries the phosphoserine modification. Thr255 carries the phosphothreonine modification. Lys266 is covalently cross-linked (Glycyl lysine isopeptide (Lys-Gly) (interchain with G-Cter in SUMO1); alternate). Residue Lys266 forms a Glycyl lysine isopeptide (Lys-Gly) (interchain with G-Cter in SUMO2); alternate linkage. Position 302 is a phosphoserine (Ser302).

It belongs to the SGT1 family. As to quaternary structure, probably associates with SCF (SKP1-CUL1-F-box protein) complex through interaction with SKP1. Interacts with S100A6. Interacts with HSP90. In terms of processing, phosphorylated at Ser-252 and Ser-302, dephosphorylation promotes nuclear translocation, most likely due to disruption of the SUGT1-HSP90 complex.

The protein resides in the cytoplasm. It is found in the nucleus. Functionally, may play a role in ubiquitination and subsequent proteasomal degradation of target proteins. The protein is Protein SGT1 homolog of Mus musculus (Mouse).